We begin with the raw amino-acid sequence, 134 residues long: MTLKKVDANPSTLESSLQELKSDETSRSKINFILFLADNDPTTGQSWCPDCVRAEPVIYKTLEEFPEEVKLIRAYAGDRPTWRTPAHPWRVDSRFKLTGVPTLVRWDGDSVKGRLEDHQAHLPHLILPLLAPST.

The Thioredoxin domain occupies 1–134 (MTLKKVDANP…LILPLLAPST (134 aa)). Residues Cys48 and Cys51 each act as nucleophile in the active site. Cys48 and Cys51 are oxidised to a cystine.

The protein belongs to the thioredoxin family.

Probable thiol-disulfide oxidoreductase that may participate in various redox reactions. This chain is Thioredoxin-like protein Clot, found in Arabidopsis thaliana (Mouse-ear cress).